Reading from the N-terminus, the 699-residue chain is SPS-sensor serine protease component SSY5 (699 aa).

2 disordered regions span residues Met-1–Phe-113 and Val-129–Arg-158. A propeptide spanning residues Met-1–Ala-381 is cleaved from the precursor. The span at Asn-8–Thr-18 shows a compositional bias: basic and acidic residues. The span at Asn-24–Gly-38 shows a compositional bias: polar residues. Residues Asn-39 to Asn-51 show a composition bias toward basic and acidic residues. Residues Ser-61–Arg-78 show a composition bias toward low complexity. Over residues Thr-83–Glu-93 the composition is skewed to polar residues. A compositionally biased stretch (low complexity) spans Ser-144–Ser-154. The serine protease stretch occupies residues Phe-459 to Gly-699. Catalysis depends on charge relay system residues His-465, Asp-545, and Ser-640.

The protein belongs to the peptidase S64 family. As to quaternary structure, component of the plasma membrane SPS (SSY1-PTR3-SSY5) amino acid sensor complex. Post-translationally, the propeptide is autoproteolytically cleaved from the catalytic domain but remains associated, forming an inactive protease complex. This processing occurs even in the absence of signaling.

It localises to the cell membrane. Its function is as follows. Protease component of the SPS-sensor system, which regulates the expression of several amino acid-metabolizing enzymes and amino acid- and peptide-permeases in response to extracellular amino acid levels by controlling the activity of two transcription factors, STP1 and STP2. Catalyzes the activation of these transcription factors, which are synthesized as latent cytoplasmic precursors, by proteolytic removal of an N-terminal inhibitory domain containing cytoplasmic retention motifs. SSY5 binds as an inactive protease complex to STP1. In response to extracellular amino acids and dependent on the other SPS-sensor components, the inhibitory propeptide is induced to dissociate, and thereby enables the catalytic domain to process STP1. This is SPS-sensor serine protease component SSY5 (SSY5) from Saccharomyces cerevisiae (strain AWRI1631) (Baker's yeast).